We begin with the raw amino-acid sequence, 504 residues long: Subtilisin-like protease 1 (504 aa).

Residues 1 to 19 (MGVFRFISISLAAVSAANA) form the signal peptide. A propeptide spanning residues 20–116 (AQILSMPHAQ…VEPDTIVSVH (97 aa)) is cleaved from the precursor. One can recognise an Inhibitor I9 domain in the interval 34 to 116 (SYIVMMKDDT…VEPDTIVSVH (83 aa)). Positions 126 to 400 (SWGLARISNP…NVLINNGGAK (275 aa)) constitute a Peptidase S8 domain. Residues Asp158 and His190 each act as charge relay system in the active site. Residues 172–198 (AIWGSNQVNDGDDRDGSGHGTHTSGTM) form a disordered region. Residues Asn233 and Asn251 are each glycosylated (N-linked (GlcNAc...) asparagine). Polar residues predominate over residues 282–294 (NDNQDAQSSSPAS). The interval 282 to 312 (NDNQDAQSSSPASEPSVCTVGSSAEDDSRSS) is disordered. Residue Ser345 is the Charge relay system of the active site. The span at 378 to 394 (TSSITDAGPGTPTNVLI) shows a compositional bias: polar residues. The tract at residues 378–483 (TSSITDAGPG…YPGGDNFDFD (106 aa)) is disordered. 2 stretches are compositionally biased toward pro residues: residues 405-449 (NPNP…PGQP) and 457-473 (APAP…PHTP).

This sequence belongs to the peptidase S8 family.

It localises to the secreted. Secreted subtilisin-like serine protease with keratinolytic activity that contributes to pathogenicity. The chain is Subtilisin-like protease 1 (SUB1) from Trichophyton rubrum (Athlete's foot fungus).